A 336-amino-acid polypeptide reads, in one-letter code: Homoserine dehydrogenase (336 aa).

An NADPH-binding site is contributed by Phe-8. Ala-10, Ile-11, and Thr-94 together coordinate NAD(+). NADPH-binding residues include Ile-11, Thr-94, and Lys-123. NADP(+) is bound by residues Ile-11, Thr-94, and Lys-123. Glu-147, Val-150, and Gly-152 together coordinate Na(+). NADP(+) is bound by residues Gly-205 and Glu-208. Glu-208 and Asp-219 together coordinate L-homoserine. The Proton donor role is filled by Lys-223. Residue Gly-315 coordinates NADPH. Gly-315 provides a ligand contact to NAD(+). Gly-315 is a binding site for NADP(+).

It belongs to the homoserine dehydrogenase family. A metal cation is required as a cofactor.

It catalyses the reaction L-homoserine + NADP(+) = L-aspartate 4-semialdehyde + NADPH + H(+). It carries out the reaction L-homoserine + NAD(+) = L-aspartate 4-semialdehyde + NADH + H(+). The protein operates within amino-acid biosynthesis; L-methionine biosynthesis via de novo pathway; L-homoserine from L-aspartate: step 3/3. It functions in the pathway amino-acid biosynthesis; L-threonine biosynthesis; L-threonine from L-aspartate: step 3/5. Catalyzes the conversion of L-aspartate-beta-semialdehyde (L-Asa) to L-homoserine (L-Hse), the third step in the biosynthesis of threonine and methionine from aspartate. The polypeptide is Homoserine dehydrogenase (hom) (Methanocaldococcus jannaschii (strain ATCC 43067 / DSM 2661 / JAL-1 / JCM 10045 / NBRC 100440) (Methanococcus jannaschii)).